A 333-amino-acid polypeptide reads, in one-letter code: Glyoxylate reductase (333 aa).

Residues 158 to 161, 180 to 182, and 239 to 241 each bind NADP(+); these read FGRI, SRS, and IAR. Catalysis depends on residues arginine 241 and glutamate 270. The active-site Proton donor is histidine 288. Residue 288-290 participates in NADP(+) binding; it reads HIG.

It belongs to the D-isomer specific 2-hydroxyacid dehydrogenase family. GyaR subfamily. Homodimer.

The protein resides in the cytoplasm. It carries out the reaction glycolate + NAD(+) = glyoxylate + NADH + H(+). The chain is Glyoxylate reductase from Thermococcus kodakarensis (strain ATCC BAA-918 / JCM 12380 / KOD1) (Pyrococcus kodakaraensis (strain KOD1)).